We begin with the raw amino-acid sequence, 176 residues long: Large ribosomal subunit protein uL6 (176 aa).

This sequence belongs to the universal ribosomal protein uL6 family. Part of the 50S ribosomal subunit.

Its function is as follows. This protein binds to the 23S rRNA, and is important in its secondary structure. It is located near the subunit interface in the base of the L7/L12 stalk, and near the tRNA binding site of the peptidyltransferase center. In Burkholderia ambifaria (strain MC40-6), this protein is Large ribosomal subunit protein uL6.